We begin with the raw amino-acid sequence, 245 residues long: MEEAKSQSLEEDFEGQATHTGPKGVINDWRKFKLESEDSDSVPPSKKEILRQMSSPQSRDNKDSKERFSRKMSIQEYELIHRDKEDENCLRKYRRQCMQDMHQKLSFGPRYGFVYELETGEQFLETIEKEQKITTIVVHIYEDGIKGCDALNSSFTCLAVEYPMVKFCKIKASNTGARDRFSSDVLPTLLVYKGGELISNFISVSEQFAEEFFAGDVESFLNEYGLLPERETHALDQTNMEEDIE.

Over residues 1–14 (MEEAKSQSLEEDFE) the composition is skewed to acidic residues. The disordered stretch occupies residues 1–68 (MEEAKSQSLE…RDNKDSKERF (68 aa)). A Phosducin domain is found at 1–241 (MEEAKSQSLE…THALDQTNME (241 aa)). A compositionally biased stretch (basic and acidic residues) spans 59–68 (RDNKDSKERF). A Phosphoserine; by PKA modification is found at Ser-73. Residues 111–245 (YGFVYELETG…DQTNMEEDIE (135 aa)) are thioredoxin fold.

This sequence belongs to the phosducin family. Interacts with CRX. Forms a complex with the beta and gamma subunits of the GTP-binding protein, transducin. In terms of processing, light-induced changes in cyclic nucleotide levels modulate the phosphorylation of this protein by cAMP kinase.

It localises to the cytoplasm. The protein localises to the cytosol. Its subcellular location is the nucleus. It is found in the cell projection. The protein resides in the cilium. It localises to the photoreceptor outer segment. The protein localises to the photoreceptor inner segment. Inhibits the transcriptional activation activity of the cone-rod homeobox CRX. May participate in the regulation of visual phototransduction or in the integration of photoreceptor metabolism. This chain is Phosducin (PDC), found in Felis catus (Cat).